The following is a 261-amino-acid chain: Cytochrome c oxidase subunit 3 (261 aa).

Over 1 to 15 the chain is Mitochondrial matrix; sequence MTHQTHAYHMVNPSP. The helical transmembrane segment at 16-34 threads the bilayer; sequence WPLTGALSALLMTSGLAMW. Residues 35–40 lie on the Mitochondrial intermembrane side of the membrane; the sequence is FHFNST. A helical membrane pass occupies residues 41-66; the sequence is ILLMIGLTTNTLTMYQWWRDVIREST. At 67 to 72 the chain is on the mitochondrial matrix side; sequence FQGHHT. The chain crosses the membrane as a helical span at residues 73-105; the sequence is PTVQKGLRYGMILFIISEVLFFTGFFWAFYHSS. The Mitochondrial intermembrane portion of the chain corresponds to 106–128; sequence LAPTPELGGCWPPTGIHPLNPLE. The helical transmembrane segment at 129–152 threads the bilayer; it reads VPLLNTSVLLASGVSITWAHHSLM. The Mitochondrial matrix segment spans residues 153 to 155; sequence EGN. The helical transmembrane segment at 156–183 threads the bilayer; the sequence is RYPMLQALFITIALGVYFTLLQASEYYE. Topologically, residues 184–190 are mitochondrial intermembrane; that stretch reads APFTISD. The chain crosses the membrane as a helical span at residues 191 to 223; sequence GIYGSTFFVATGFHGLHVIIGSTFLIVCFFRQL. Residues 224–232 lie on the Mitochondrial matrix side of the membrane; sequence KFHFTSNHH. Residues 233–256 form a helical membrane-spanning segment; the sequence is FGFEAAAWYWHFVDVVWLFLYVSI. The Mitochondrial intermembrane portion of the chain corresponds to 257 to 261; it reads YWWGS.

It belongs to the cytochrome c oxidase subunit 3 family. In terms of assembly, component of the cytochrome c oxidase (complex IV, CIV), a multisubunit enzyme composed of 14 subunits. The complex is composed of a catalytic core of 3 subunits MT-CO1, MT-CO2 and MT-CO3, encoded in the mitochondrial DNA, and 11 supernumerary subunits COX4I, COX5A, COX5B, COX6A, COX6B, COX6C, COX7A, COX7B, COX7C, COX8 and NDUFA4, which are encoded in the nuclear genome. The complex exists as a monomer or a dimer and forms supercomplexes (SCs) in the inner mitochondrial membrane with NADH-ubiquinone oxidoreductase (complex I, CI) and ubiquinol-cytochrome c oxidoreductase (cytochrome b-c1 complex, complex III, CIII), resulting in different assemblies (supercomplex SCI(1)III(2)IV(1) and megacomplex MCI(2)III(2)IV(2)).

The protein localises to the mitochondrion inner membrane. It catalyses the reaction 4 Fe(II)-[cytochrome c] + O2 + 8 H(+)(in) = 4 Fe(III)-[cytochrome c] + 2 H2O + 4 H(+)(out). Functionally, component of the cytochrome c oxidase, the last enzyme in the mitochondrial electron transport chain which drives oxidative phosphorylation. The respiratory chain contains 3 multisubunit complexes succinate dehydrogenase (complex II, CII), ubiquinol-cytochrome c oxidoreductase (cytochrome b-c1 complex, complex III, CIII) and cytochrome c oxidase (complex IV, CIV), that cooperate to transfer electrons derived from NADH and succinate to molecular oxygen, creating an electrochemical gradient over the inner membrane that drives transmembrane transport and the ATP synthase. Cytochrome c oxidase is the component of the respiratory chain that catalyzes the reduction of oxygen to water. Electrons originating from reduced cytochrome c in the intermembrane space (IMS) are transferred via the dinuclear copper A center (CU(A)) of subunit 2 and heme A of subunit 1 to the active site in subunit 1, a binuclear center (BNC) formed by heme A3 and copper B (CU(B)). The BNC reduces molecular oxygen to 2 water molecules using 4 electrons from cytochrome c in the IMS and 4 protons from the mitochondrial matrix. In Raphicerus melanotis (Cape grysbok), this protein is Cytochrome c oxidase subunit 3 (MT-CO3).